Consider the following 207-residue polypeptide: Small ribosomal subunit protein uS4 (207 aa).

The tract at residues 26–47 (AINNKNYKPGQQGNSSSISKPS) is disordered. Residues 28-39 (NNKNYKPGQQGN) show a composition bias toward polar residues. The 64-residue stretch at 95–158 (RRLDAVVYRL…KQIPIVIGAI (64 aa)) folds into the S4 RNA-binding domain.

It belongs to the universal ribosomal protein uS4 family. Part of the 30S ribosomal subunit. Contacts protein S5. The interaction surface between S4 and S5 is involved in control of translational fidelity.

One of the primary rRNA binding proteins, it binds directly to 16S rRNA where it nucleates assembly of the body of the 30S subunit. In terms of biological role, with S5 and S12 plays an important role in translational accuracy. The sequence is that of Small ribosomal subunit protein uS4 from Orientia tsutsugamushi (strain Boryong) (Rickettsia tsutsugamushi).